A 304-amino-acid polypeptide reads, in one-letter code: Acetylglutamate kinase (304 aa).

Substrate contacts are provided by residues G74 to G75, R96, and N201.

Belongs to the acetylglutamate kinase family. ArgB subfamily.

Its subcellular location is the cytoplasm. It carries out the reaction N-acetyl-L-glutamate + ATP = N-acetyl-L-glutamyl 5-phosphate + ADP. The protein operates within amino-acid biosynthesis; L-arginine biosynthesis; N(2)-acetyl-L-ornithine from L-glutamate: step 2/4. Its function is as follows. Catalyzes the ATP-dependent phosphorylation of N-acetyl-L-glutamate. This chain is Acetylglutamate kinase, found in Alkalilimnicola ehrlichii (strain ATCC BAA-1101 / DSM 17681 / MLHE-1).